The following is a 197-amino-acid chain: Potassium-transporting ATPase KdpC subunit (197 aa).

Residues 7 to 27 traverse the membrane as a helical segment; the sequence is PALVSMGLFTVLLGLAYPLAV.

It belongs to the KdpC family. In terms of assembly, the system is composed of three essential subunits: KdpA, KdpB and KdpC.

The protein localises to the cell inner membrane. In terms of biological role, part of the high-affinity ATP-driven potassium transport (or Kdp) system, which catalyzes the hydrolysis of ATP coupled with the electrogenic transport of potassium into the cytoplasm. This subunit acts as a catalytic chaperone that increases the ATP-binding affinity of the ATP-hydrolyzing subunit KdpB by the formation of a transient KdpB/KdpC/ATP ternary complex. The chain is Potassium-transporting ATPase KdpC subunit from Caulobacter vibrioides (strain ATCC 19089 / CIP 103742 / CB 15) (Caulobacter crescentus).